Reading from the N-terminus, the 179-residue chain is Large ribosomal subunit protein uL5 (179 aa).

It belongs to the universal ribosomal protein uL5 family. As to quaternary structure, part of the 50S ribosomal subunit; part of the 5S rRNA/L5/L18/L25 subcomplex. Contacts the 5S rRNA and the P site tRNA. Forms a bridge to the 30S subunit in the 70S ribosome.

Functionally, this is one of the proteins that bind and probably mediate the attachment of the 5S RNA into the large ribosomal subunit, where it forms part of the central protuberance. In the 70S ribosome it contacts protein S13 of the 30S subunit (bridge B1b), connecting the 2 subunits; this bridge is implicated in subunit movement. Contacts the P site tRNA; the 5S rRNA and some of its associated proteins might help stabilize positioning of ribosome-bound tRNAs. This chain is Large ribosomal subunit protein uL5, found in Shewanella denitrificans (strain OS217 / ATCC BAA-1090 / DSM 15013).